Reading from the N-terminus, the 665-residue chain is Protein-arginine deiminase type-2 (665 aa).

Residues aspartate 123, aspartate 125, aspartate 127, valine 129, glutamate 131, asparagine 154, aspartate 156, glutamate 158, aspartate 166, aspartate 169, lysine 171, aspartate 177, aspartate 180, glutamate 354, aspartate 389, phenylalanine 408, leucine 411, and glutamate 412 each coordinate Ca(2+). Cysteine 647 acts as the Nucleophile in catalysis.

It belongs to the protein arginine deiminase family. As to quaternary structure, homodimer. Ca(2+) is required as a cofactor. Detected in keratinocytes in epidermis (at protein level).

The protein resides in the cytoplasm. The enzyme catalyses L-arginyl-[protein] + H2O = L-citrullyl-[protein] + NH4(+). Its function is as follows. Catalyzes the deimination of arginine residues of proteins. The protein is Protein-arginine deiminase type-2 (PADI2) of Homo sapiens (Human).